Here is a 727-residue protein sequence, read N- to C-terminus: MSYSVTLTGPGPWGFRLQGGKDFNMPLTISRITPGSKAAQSQLSQGDLVVAIDGVNTDTMTHLEAQNKIKSASYNLSLTLQKSKRPIPISTTAPPVQTPLPVIPHQKDPALDTNGSLVAPSPSPEARASPGTPGTPELRPTFSPAFSRPSAFSSLAEASDPGPPRASLRAKTSPEGARDLLGPKALPGSSQPRQYNNPIGLYSAETLREMAQMYQMSLRGKASGVGLPGGSLPIKDLAVDSASPVYQAVIKSQNKPEDEADEWARRSSNLQSRSFRILAQMTGTEFMQDPDEEALRRSSTPIEHAPVCTSQATTPLLPASAQPPAAASPSAASPPLATAAAHTAIASASTTAPASSPADSPRPQASSYSPAVAASSAPATHTSYSEGPAAPAPKPRVVTTASIRPSVYQPVPASTYSPSPGANYSPTPYTPSPAPAYTPSPAPAYTPSPVPTYTPSPAPAYTPSPAPNYNPAPSVAYSGGPAEPASRPPWVTDDSFSQKFAPGKSTTSISKQTLPRGGPAYTPAGPQVPPLARGTVQRAERFPASSRTPLCGHCNNVIRGPFLVAMGRSWHPEEFTCAYCKTSLADVCFVEEQNNVYCERCYEQFFAPLCAKCNTKIMGEVMHALRQTWHTTCFVCAACKKPFGNSLFHMEDGEPYCEKDYINLFSTKCHGCDFPVEAGDKFIEALGHTWHDTCFICAVCHVNLEGQPFYSKKDRPLCKKHAHTINL.

The PDZ domain occupies 1–84 (MSYSVTLTGP…NLSLTLQKSK (84 aa)). S44, S121, and S123 each carry phosphoserine. Residues 86-197 (PIPISTTAPP…GSSQPRQYNN (112 aa)) are disordered. A compositionally biased stretch (low complexity) spans 140–156 (PTFSPAFSRPSAFSSLA). Residues 188–197 (GSSQPRQYNN) show a composition bias toward polar residues. The residue at position 217 (S217) is a Phosphoserine. R219 bears the Omega-N-methylarginine mark. The residue at position 223 (S223) is a Phosphoserine. Disordered stretches follow at residues 284–440 (TEFM…YTPS) and 472–529 (APSV…PQVP). The segment covering 312-385 (ATTPLLPASA…SAPATHTSYS (74 aa)) has biased composition (low complexity). Positions 428–440 (PYTPSPAPAYTPS) are enriched in pro residues. A compositionally biased stretch (polar residues) spans 494 to 513 (DSFSQKFAPGKSTTSISKQT). Omega-N-methylarginine occurs at positions 516 and 533. 3 consecutive LIM zinc-binding domains span residues 549–607 (PLCG…QFFA), 608–667 (PLCA…LFST), and 668–727 (KCHG…TINL).

Interacts via its LIM domains with various PKC isoforms. Interacts via its PDZ domain with the ACTN2 C-terminal region. Interacts with MYOZ1, MYOZ2 and MYOZ3. In terms of tissue distribution, expressed primarily in skeletal muscle and to a lesser extent in heart. Also detected in brain and placenta.

It is found in the cytoplasm. It localises to the perinuclear region. The protein resides in the cell projection. Its subcellular location is the pseudopodium. The protein localises to the cytoskeleton. It is found in the myofibril. It localises to the sarcomere. The protein resides in the z line. Its function is as follows. May function as an adapter in striated muscle to couple protein kinase C-mediated signaling via its LIM domains to the cytoskeleton. The polypeptide is LIM domain-binding protein 3 (Homo sapiens (Human)).